The primary structure comprises 510 residues: Probable malate:quinone oxidoreductase (510 aa).

Belongs to the MQO family. FAD is required as a cofactor.

The catalysed reaction is (S)-malate + a quinone = a quinol + oxaloacetate. Its pathway is carbohydrate metabolism; tricarboxylic acid cycle; oxaloacetate from (S)-malate (quinone route): step 1/1. The sequence is that of Probable malate:quinone oxidoreductase from Wigglesworthia glossinidia brevipalpis.